The primary structure comprises 123 residues: Putative iron-sulfur cluster insertion protein ErpA (123 aa).

Cysteine 51, cysteine 115, and cysteine 117 together coordinate iron-sulfur cluster.

It belongs to the HesB/IscA family. In terms of assembly, homodimer. It depends on iron-sulfur cluster as a cofactor.

Functionally, required for insertion of 4Fe-4S clusters. The protein is Putative iron-sulfur cluster insertion protein ErpA of Burkholderia multivorans (strain ATCC 17616 / 249).